Here is a 212-residue protein sequence, read N- to C-terminus: Thymidylate kinase (212 aa).

Residues 16-21, arginine 97, arginine 182, and lysine 192 each bind ATP; that span reads RAGKTT.

This sequence belongs to the thymidylate kinase family. Mg(2+) serves as cofactor.

The enzyme catalyses dTMP + ATP = dTDP + ADP. Its pathway is pyrimidine metabolism; dTTP biosynthesis. Catalyzes the phosphorylation of thymidine monophosphate (dTMP) to thymidine diphosphate (dTDP), the immediate precursor for the DNA building block dTTP, with ATP as the preferred phosphoryl donor in the presence of Mg(2+). The chain is Thymidylate kinase (dtymk) from Danio rerio (Zebrafish).